The chain runs to 700 residues: pH-response regulator protein palI/prr-5 (700 aa).

The Cytoplasmic portion of the chain corresponds to 1-8 (MLRPATPL). Residues 9–29 (AVLLFAAFGLLTLATISTPII) form a helical membrane-spanning segment. The Extracellular segment spans residues 30 to 90 (KQIPLSSFEI…PRATRSTLSS (61 aa)). A helical membrane pass occupies residues 91–111 (ILIVHPVAALITLINFVLAIV). The Cytoplasmic segment spans residues 112-123 (AHFHSPSHSARY). Residues 124-144 (LLILFIVSFVDFIVCLLCFLV) traverse the membrane as a helical segment. Residues 145–152 (DVLLFIPH) lie on the Extracellular side of the membrane. The helical transmembrane segment at 153-173 (LSWGSYIVVAATILVAFCGLV) threads the bilayer. The Cytoplasmic portion of the chain corresponds to 174–700 (TCAMRRTLVN…GNMPRAAGPR (527 aa)). Disordered regions lie at residues 226-491 (SGAN…GIRD), 507-560 (VPDP…PISE), and 573-700 (DVDP…AGPR). Over residues 234-252 (KLPEFTTFEKKDDRSEERI) the composition is skewed to basic and acidic residues. The segment covering 320-378 (GRGGMPPGGYRGRGGFPGPGRGGGPPQNGRGGYGPPGRGRGGYGPPPRGYGGPGPRGGR) has biased composition (gly residues). Polar residues predominate over residues 414–424 (SPYANRQQSPG). Polar residues-rich tracts occupy residues 593 to 603 (SMQSPPASNSY) and 615 to 637 (ESEN…NSAN). Positions 657–671 (VVPRRPVNRPGAGPA) are enriched in low complexity.

It belongs to the palI/RIM9 family.

Its subcellular location is the cell membrane. In terms of biological role, required for the proteolytic cleavage of the transcription factor pacc-1 in response to alkaline ambient pH. This chain is pH-response regulator protein palI/prr-5 (prr-5), found in Neurospora crassa (strain ATCC 24698 / 74-OR23-1A / CBS 708.71 / DSM 1257 / FGSC 987).